The primary structure comprises 454 residues: Glutamine synthetase (454 aa).

Residues 25–111 (QGIDFLRLQF…LICDVVDREG (87 aa)) enclose the GS beta-grasp domain. Positions 118-454 (PRQVLKNVLA…WETDRYLEKF (337 aa)) constitute a GS catalytic domain. Mg(2+) contacts are provided by E141 and E143. E193 lines the ATP pocket. The Mg(2+) site is built by E198 and E205. Residues 249–250 (NG) and G250 each bind L-glutamate. H254 contributes to the Mg(2+) binding site. ATP contacts are provided by residues 256 to 258 (HIS) and S258. Residues R308, E314, and R326 each coordinate L-glutamate. ATP is bound by residues R326 and R331. E343 is a binding site for Mg(2+). R345 is a binding site for L-glutamate.

This sequence belongs to the glutamine synthetase family. Oligomer of 12 subunits arranged in the form of two hexagons. In its feedback-inhibited form, interacts with TnrA in order to block its DNA-binding activity. The cofactor is Mg(2+).

It is found in the cytoplasm. The catalysed reaction is L-glutamate + NH4(+) + ATP = L-glutamine + ADP + phosphate + H(+). Inhibited by glutamine. Glutamine synthetase (GS) is an unusual multitasking protein that functions as an enzyme, a transcription coregulator, and a chaperone in ammonium assimilation and in the regulation of genes involved in nitrogen metabolism. It catalyzes the ATP-dependent biosynthesis of glutamine from glutamate and ammonia. Feedback-inhibited GlnA also interacts with and regulates the activity of the transcriptional regulator TnrA. During nitrogen limitation, TnrA is in its DNA-binding active state and turns on the transcription of genes required for nitrogen assimilation. Under conditions of nitrogen excess, feedback-inhibited GlnA forms a stable complex with TnrA, which inhibits its DNA-binding activity. In contrast, feedback-inhibited GlnA acts as a chaperone to stabilize the DNA-binding activity of GlnR, which represses the transcription of nitrogen assimilation genes. This Halobacterium salinarum (strain ATCC 700922 / JCM 11081 / NRC-1) (Halobacterium halobium) protein is Glutamine synthetase.